Here is a 284-residue protein sequence, read N- to C-terminus: Pseudouridine-5'-phosphate glycosidase (284 aa).

E17 acts as the Proton donor in catalysis. K77 and V97 together coordinate substrate. Residue D126 participates in Mn(2+) binding. Substrate is bound at residue 128–130; the sequence is SQD. The Nucleophile role is filled by K147.

Belongs to the pseudouridine-5'-phosphate glycosidase family. As to quaternary structure, homotrimer. The cofactor is Mn(2+).

The catalysed reaction is D-ribose 5-phosphate + uracil = psi-UMP + H2O. Its function is as follows. Catalyzes the reversible cleavage of pseudouridine 5'-phosphate (PsiMP) to ribose 5-phosphate and uracil. Functions biologically in the cleavage direction, as part of a pseudouridine degradation pathway. This Thermotoga neapolitana (strain ATCC 49049 / DSM 4359 / NBRC 107923 / NS-E) protein is Pseudouridine-5'-phosphate glycosidase.